The primary structure comprises 477 residues: Histidine--tRNA ligase (477 aa).

Belongs to the class-II aminoacyl-tRNA synthetase family. In terms of assembly, homodimer.

It localises to the cytoplasm. It catalyses the reaction tRNA(His) + L-histidine + ATP = L-histidyl-tRNA(His) + AMP + diphosphate + H(+). This Xanthomonas campestris pv. campestris (strain 8004) protein is Histidine--tRNA ligase.